A 160-amino-acid chain; its full sequence is V-type proton ATPase subunit c (160 aa).

Residues 1-8 (MTELCPVY) are Vacuolar-facing. The chain crosses the membrane as a helical span at residues 9–31 (APFFGAIGCASAIIFTSLGAAYG). Residues 32-53 (TAKSGVGICATCVLRPDLLFKN) are Cytoplasmic-facing. Residues 54-74 (IVPVIMAGIIAIYGLVVSVLV) traverse the membrane as a helical segment. At 75-90 (CYSLGQKQALYTGFIQ) the chain is on the vacuolar side. A helical transmembrane segment spans residues 91–112 (LGAGLSVGLSGLAAGFAIGIVG). Residues 113–124 (DAGVRGSSQQPR) lie on the Cytoplasmic side of the membrane. Residues 125-150 (LFVGMILILIFAEVLGLYGLIVALLL) traverse the membrane as a helical segment. The Vacuolar portion of the chain corresponds to 151 to 160 (NSRATQDVVC).

This sequence belongs to the V-ATPase proteolipid subunit family. V-ATPase is a heteromultimeric enzyme composed of a peripheral catalytic V1 complex (components A to H) attached to an integral membrane V0 proton pore complex (components: a, c, c', c'', d, e, f and VOA1). The decameric c-ring forms the proton-conducting pore, and is composed of eight proteolipid subunits c, one subunit c' and one subunit c''.

It localises to the vacuole membrane. Functionally, proton-conducting pore forming subunit of the V0 complex of vacuolar(H+)-ATPase (V-ATPase), a multisubunit enzyme composed of a peripheral complex (V1) that hydrolyzes ATP and a membrane integral complex (V0) that translocates protons. V-ATPase is responsible for acidifying and maintaining the pH of intracellular compartments. This Saccharomyces cerevisiae (strain ATCC 204508 / S288c) (Baker's yeast) protein is V-type proton ATPase subunit c (VMA3).